A 522-amino-acid chain; its full sequence is Exo-alpha-(1-&gt;6)-L-arabinofuranosidase (522 aa).

The alpha-L-arabinofuranose site is built by Glu39, Asn84, and Asn185. Glu186 (proton donor/acceptor) is an active-site residue. Tyr257, Glu310, and Gln370 together coordinate alpha-L-arabinofuranose. Glu310 (nucleophile) is an active-site residue.

This sequence belongs to the glycosyl hydrolase 51 family. Homohexamer; trimer of dimers.

The enzyme catalyses Hydrolysis of terminal non-reducing alpha-L-arabinofuranoside residues in alpha-L-arabinosides.. It catalyses the reaction (20S)-ginsenoside Rc + H2O = L-arabinofuranose + (20S)-ginsenoside Rd. Completely inhibited by Cu(2+) and partially inhibited by Co(2+) and Ba(2+). Its function is as follows. Catalyzes the hydrolysis of p-nitrophenyl-alpha-L-arabinofuranoside (pNP-alphaL-Af) and the hydrolysis of the terminal alpha-L-arabinofuranoside at the C20 position of ginsenoside Rc to produce ginsenoside Rd. Cannot hydrolyze p-nitrophenyl-alpha-L-arabinopyranoside (pNP-alphaL-Ap) and ginsenoside Rb2. The protein is Exo-alpha-(1-&gt;6)-L-arabinofuranosidase of Bifidobacterium longum.